Consider the following 474-residue polypeptide: Receptor-transporting protein 3 (474 aa).

At 1–453 the chain is on the cytoplasmic side; sequence MMEEDIGDTE…SCCEAACNCM (453 aa). The 3CxxC-type zinc-finger motif lies at 53 to 164; that stretch reads TFARFHCPSC…SSNCEACLLG (112 aa). Residues 175 to 304 form a disordered region; the sequence is SKPPAPPLSP…ISCTSKPSTT (130 aa). Polar residues-rich tracts occupy residues 197–228 and 259–304; these read VTCS…NPTK and VTCS…PSTT. Residues 454 to 474 traverse the membrane as a helical segment; it reads SQSPLCCLAFLILFLLLWYLL.

Belongs to the TMEM7 family. Interacts with TAS2R16. In terms of tissue distribution, expressed predominantly in the liver. Not detected in the olfactory epithelium.

Its subcellular location is the membrane. Functionally, promotes functional cell surface expression of the bitter taste receptors TAS2R16 and TAS2R43. The sequence is that of Receptor-transporting protein 3 (Rtp3) from Mus musculus (Mouse).